An 81-amino-acid polypeptide reads, in one-letter code: Large ribosomal subunit protein bL31B (81 aa).

It belongs to the bacterial ribosomal protein bL31 family. Type B subfamily. Part of the 50S ribosomal subunit.

This chain is Large ribosomal subunit protein bL31B, found in Limosilactobacillus reuteri (strain DSM 20016) (Lactobacillus reuteri).